We begin with the raw amino-acid sequence, 437 residues long: MPLNFRDRFNVPVLKNGEEVAYLVGNSLGLMPHKTRDYVNQEMDAWSQLGVKGHFVSGKEDLGQDVHQGPWYSCDEPLHGLVGPILGASEDEVAIMNTLTSNIHSLFSAFYKPTAKRSKILFEAKAFPSDTYAMEAQARLHNLDPSEALIKLAPKDGLHTLSDDDIIKVIEEQGDEIAVVFFSGIQFYTGQLFDIPRITAAAKAKGCVVGWDLAHAAGNVPLKLHDWNVDFAVFCTYKYMNSGPGGIGGLFVHDKYADDQRPRLAGWWGNNAETRFKMLDEFDPIRGARGYKQSNPSVLCVLALRASLELFKEAGGIEKLRERSIELTNRLLKGLLASPHYIAPENIEIFGNSGKAWFTIITPQAEHQRGAQLSLLFGPDGTMKKVFDYLDDHGVLGDERNPDVIRLAPAPLYNNERDVDLAIKLINDSINLINGSA.

Pyridoxal 5'-phosphate-binding positions include leucine 99, threonine 100, 127 to 130 (FPSD), serine 183, aspartate 212, histidine 215, and tyrosine 237. Lysine 238 carries the post-translational modification N6-(pyridoxal phosphate)lysine. Positions 267 and 295 each coordinate pyridoxal 5'-phosphate.

This sequence belongs to the kynureninase family. As to quaternary structure, homodimer. The cofactor is pyridoxal 5'-phosphate.

It localises to the cytoplasm. The enzyme catalyses L-kynurenine + H2O = anthranilate + L-alanine + H(+). It catalyses the reaction 3-hydroxy-L-kynurenine + H2O = 3-hydroxyanthranilate + L-alanine + H(+). The protein operates within amino-acid degradation; L-kynurenine degradation; L-alanine and anthranilate from L-kynurenine: step 1/1. It functions in the pathway cofactor biosynthesis; NAD(+) biosynthesis; quinolinate from L-kynurenine: step 2/3. Functionally, catalyzes the cleavage of L-kynurenine (L-Kyn) and L-3-hydroxykynurenine (L-3OHKyn) into anthranilic acid (AA) and 3-hydroxyanthranilic acid (3-OHAA), respectively. This Yarrowia lipolytica (strain CLIB 122 / E 150) (Yeast) protein is Kynureninase.